A 283-amino-acid polypeptide reads, in one-letter code: Bifunctional protein FolD (283 aa).

NADP(+)-binding positions include Gly-157–Gly-159 and Ile-224.

This sequence belongs to the tetrahydrofolate dehydrogenase/cyclohydrolase family. Homodimer.

It carries out the reaction (6R)-5,10-methylene-5,6,7,8-tetrahydrofolate + NADP(+) = (6R)-5,10-methenyltetrahydrofolate + NADPH. The catalysed reaction is (6R)-5,10-methenyltetrahydrofolate + H2O = (6R)-10-formyltetrahydrofolate + H(+). It functions in the pathway one-carbon metabolism; tetrahydrofolate interconversion. Its function is as follows. Catalyzes the oxidation of 5,10-methylenetetrahydrofolate to 5,10-methenyltetrahydrofolate and then the hydrolysis of 5,10-methenyltetrahydrofolate to 10-formyltetrahydrofolate. This is Bifunctional protein FolD from Mycoplasmoides gallisepticum (strain R(low / passage 15 / clone 2)) (Mycoplasma gallisepticum).